A 92-amino-acid chain; its full sequence is Small ribosomal subunit protein uS19 (92 aa).

The protein belongs to the universal ribosomal protein uS19 family.

Protein S19 forms a complex with S13 that binds strongly to the 16S ribosomal RNA. The chain is Small ribosomal subunit protein uS19 from Mycoplasmopsis agalactiae (strain NCTC 10123 / CIP 59.7 / PG2) (Mycoplasma agalactiae).